A 205-amino-acid chain; its full sequence is Guanylate kinase (205 aa).

Residues 6 to 184 (GLLIVLSGPA…AVERIKAIVT (179 aa)) form the Guanylate kinase-like domain. Position 13-20 (13-20 (GPAGVGKG)) interacts with ATP.

Belongs to the guanylate kinase family.

Its subcellular location is the cytoplasm. It catalyses the reaction GMP + ATP = GDP + ADP. Essential for recycling GMP and indirectly, cGMP. In Shouchella clausii (strain KSM-K16) (Alkalihalobacillus clausii), this protein is Guanylate kinase.